The primary structure comprises 422 residues: uncharacterized protein (422 aa).

Disordered regions lie at residues 1–21 (MRDN…TTYD), 158–218 (TAKS…TEQV), and 246–271 (DFGT…PWLT). Residues 11–21 (AGSNTQQTTYD) show a composition bias toward polar residues. Over residues 170–199 (SKSSNGSSSTSTTQRGGSSNENKVKALQVA) the composition is skewed to low complexity. Polar residues-rich tracts occupy residues 205–216 (GSQGNSGDQGTE) and 250–261 (APSSSGSGTQDG). Low complexity predominate over residues 262-271 (TPTPWTPWLT).

Belongs to the adhesin P1 family.

This is an uncharacterized protein from Mycoplasma pneumoniae (strain ATCC 29342 / M129 / Subtype 1) (Mycoplasmoides pneumoniae).